A 497-amino-acid polypeptide reads, in one-letter code: Virion host shutoff protein (497 aa).

Disordered stretches follow at residues 122–142 and 280–373; these read EHDT…PPQD and SVIS…SAEA. Positions 309–326 are enriched in basic and acidic residues; it reads PNERRVISWRRQDDHDYD. The segment covering 327 to 344 has biased composition (acidic residues); the sequence is SSTEDSDQSDSSEEEEEC.

The protein belongs to the herpesviridae VHS protein family.

The protein localises to the virion. Functionally, minor structural protein that acts as an endoribonuclease during lytic infection. Degrades host mRNAs in the cytoplasm by cutting them at preferred sites, including some in regions of translation initiation. In Equine herpesvirus 1 (strain Ab4p) (EHV-1), this protein is Virion host shutoff protein.